Reading from the N-terminus, the 175-residue chain is Sec-independent protein translocase protein TatB (175 aa).

A helical transmembrane segment spans residues 1–21 (MLDLGLSKMALIGVVALVVLG). Disordered regions lie at residues 96 to 115 (VSPGGSAAADAPDGPSAASG) and 153 to 175 (VQSGAARVARHRPASLRRPARFL). Residues 160–175 (VARHRPASLRRPARFL) are compositionally biased toward basic residues.

The protein belongs to the TatB family. As to quaternary structure, the Tat system comprises two distinct complexes: a TatABC complex, containing multiple copies of TatA, TatB and TatC subunits, and a separate TatA complex, containing only TatA subunits. Substrates initially bind to the TatABC complex, which probably triggers association of the separate TatA complex to form the active translocon.

The protein resides in the cell inner membrane. Part of the twin-arginine translocation (Tat) system that transports large folded proteins containing a characteristic twin-arginine motif in their signal peptide across membranes. Together with TatC, TatB is part of a receptor directly interacting with Tat signal peptides. TatB may form an oligomeric binding site that transiently accommodates folded Tat precursor proteins before their translocation. In Burkholderia mallei (strain ATCC 23344), this protein is Sec-independent protein translocase protein TatB.